Reading from the N-terminus, the 394-residue chain is ATP phosphoribosyltransferase regulatory subunit (394 aa).

The protein belongs to the class-II aminoacyl-tRNA synthetase family. HisZ subfamily. As to quaternary structure, heteromultimer composed of HisG and HisZ subunits.

Its subcellular location is the cytoplasm. It functions in the pathway amino-acid biosynthesis; L-histidine biosynthesis; L-histidine from 5-phospho-alpha-D-ribose 1-diphosphate: step 1/9. Its function is as follows. Required for the first step of histidine biosynthesis. May allow the feedback regulation of ATP phosphoribosyltransferase activity by histidine. The chain is ATP phosphoribosyltransferase regulatory subunit from Teredinibacter turnerae (strain ATCC 39867 / T7901).